The primary structure comprises 482 residues: Altronate oxidoreductase (482 aa).

18–29 (IIQFGEGNFLRA) is an NAD(+) binding site.

Belongs to the mannitol dehydrogenase family. UxaB subfamily.

The enzyme catalyses D-altronate + NAD(+) = keto-D-tagaturonate + NADH + H(+). It participates in carbohydrate metabolism; pentose and glucuronate interconversion. This chain is Altronate oxidoreductase, found in Shigella sonnei (strain Ss046).